Consider the following 197-residue polypeptide: Recombination protein RecR (197 aa).

The C4-type zinc-finger motif lies at 56 to 71 (CNVCFHFSADPICEIC). The region spanning 79–173 (QTICVVADSR…KVTRIAFGLP (95 aa)) is the Toprim domain.

Belongs to the RecR family.

In terms of biological role, may play a role in DNA repair. It seems to be involved in an RecBC-independent recombinational process of DNA repair. It may act with RecF and RecO. The sequence is that of Recombination protein RecR from Rippkaea orientalis (strain PCC 8801 / RF-1) (Cyanothece sp. (strain PCC 8801)).